The following is a 936-amino-acid chain: Protocadherin alpha-5 (936 aa).

The N-terminal stretch at 1-28 is a signal peptide; the sequence is MVYSRRGSLGSRLLLLWLLLAYWKAGSG. Over 29–696 the chain is Extracellular; it reads QLHYSIPEEA…GPEAALVDVN (668 aa). 6 Cadherin domains span residues 33–132, 156–241, 242–349, 350–454, 455–564, and 580–677; these read SIPE…PPRF, ASDL…APEF, DKSI…TPEM, AITT…APAF, AQPQ…APAL, and VPRS…APKA. Asparagine 264 carries an N-linked (GlcNAc...) asparagine glycan. N-linked (GlcNAc...) asparagine glycosylation occurs at asparagine 547. A helical membrane pass occupies residues 697–717; the sequence is VYLIIAICAVSSLLVLTLLLY. The Cytoplasmic portion of the chain corresponds to 718 to 936; sequence TALRCSAQPT…GNSTTDNSDQ (219 aa). Disordered stretches follow at residues 759–793 and 816–936; these read SGEA…PDWR and AGPG…NSDQ. PXXP repeat units follow at residues 773-776, 785-788, 818-821, 873-876, and 877-890; these read PSLP, PRQP, PGGP, KFII, and PGSP…QEPT. The tract at residues 773–890 is 5 X 4 AA repeats of P-X-X-P; the sequence is PSLPQGPTST…AIISIRQEPT (118 aa). Over residues 774–786 the composition is skewed to polar residues; that stretch reads SLPQGPTSTDNPR. A compositionally biased stretch (basic and acidic residues) spans 895 to 909; it reads DKSDFITFGKKEETK.

It is found in the cell membrane. In terms of biological role, potential calcium-dependent cell-adhesion protein. May be involved in the establishment and maintenance of specific neuronal connections in the brain. The sequence is that of Protocadherin alpha-5 (PCDHA5) from Homo sapiens (Human).